Reading from the N-terminus, the 446-residue chain is Beta-glucosidase A (446 aa).

Catalysis depends on Glu166, which acts as the Proton donor. Glu351 (nucleophile) is an active-site residue.

It belongs to the glycosyl hydrolase 1 family.

The enzyme catalyses Hydrolysis of terminal, non-reducing beta-D-glucosyl residues with release of beta-D-glucose.. Its pathway is glycan metabolism; cellulose degradation. This Thermotoga maritima (strain ATCC 43589 / DSM 3109 / JCM 10099 / NBRC 100826 / MSB8) protein is Beta-glucosidase A (bglA).